We begin with the raw amino-acid sequence, 466 residues long: Adenosylhomocysteinase (466 aa).

Residues Thr-57, Asp-132, and Glu-192 each coordinate substrate. An NAD(+)-binding site is contributed by Thr-193–Thr-195. Residues Lys-222 and Asp-226 each coordinate substrate. NAD(+) is bound by residues Asn-227, Gly-256–Gly-261, Glu-279, Asn-314, Ile-335–His-337, and Asn-380.

This sequence belongs to the adenosylhomocysteinase family. NAD(+) serves as cofactor.

Its subcellular location is the cytoplasm. It catalyses the reaction S-adenosyl-L-homocysteine + H2O = L-homocysteine + adenosine. It functions in the pathway amino-acid biosynthesis; L-homocysteine biosynthesis; L-homocysteine from S-adenosyl-L-homocysteine: step 1/1. In terms of biological role, may play a key role in the regulation of the intracellular concentration of adenosylhomocysteine. In Sinorhizobium medicae (strain WSM419) (Ensifer medicae), this protein is Adenosylhomocysteinase.